A 350-amino-acid polypeptide reads, in one-letter code: Zinc finger protein 367 (350 aa).

The segment at 104–151 is disordered; it reads SGLRGRGAPPPAASASAAASGGEDEEEASSPDSGHLKDGIRRGRPRAD. The span at 137 to 151 shows a compositional bias: basic and acidic residues; sequence GHLKDGIRRGRPRAD. 2 consecutive C2H2-type zinc fingers follow at residues 167-189 and 195-219; these read IRCN…KRTH and YLCD…QRLH. The disordered stretch occupies residues 290 to 327; that stretch reads KGKLVQKADQEQQDPLEYLQSDEEDDEKRGAQRRLQEQ. The stretch at 308 to 342 forms a coiled coil; that stretch reads LQSDEEDDEKRGAQRRLQEQRERLHGALALIELAN. At S310 the chain carries Phosphoserine. The span at 316–327 shows a compositional bias: basic and acidic residues; sequence EKRGAQRRLQEQ.

The protein belongs to the krueppel C2H2-type zinc-finger protein family.

It is found in the nucleus. Its function is as follows. Transcriptional activator. Isoform 1 may be involved in transcriptional activation of erythroid genes. This is Zinc finger protein 367 (ZNF367) from Homo sapiens (Human).